A 544-amino-acid polypeptide reads, in one-letter code: T-complex protein 1 subunit gamma (544 aa).

C368 and C374 are oxidised to a cystine. Residues S525–E544 form a disordered region.

Belongs to the TCP-1 chaperonin family. Heterooligomeric complex of about 850 to 900 kDa that forms two stacked rings, 12 to 16 nm in diameter.

Its subcellular location is the cytoplasm. Molecular chaperone; assists the folding of proteins upon ATP hydrolysis. Known to play a role, in vitro, in the folding of actin and tubulin. In Drosophila melanogaster (Fruit fly), this protein is T-complex protein 1 subunit gamma.